We begin with the raw amino-acid sequence, 520 residues long: Cobyric acid synthase (520 aa).

A GATase cobBQ-type domain is found at 257-451; the sequence is WLTVAAVRLP…VHGLLESDGF (195 aa). The Nucleophile role is filled by cysteine 338. Residue histidine 443 is part of the active site.

It belongs to the CobB/CobQ family. CobQ subfamily.

Its pathway is cofactor biosynthesis; adenosylcobalamin biosynthesis. Its function is as follows. Catalyzes amidations at positions B, D, E, and G on adenosylcobyrinic A,C-diamide. NH(2) groups are provided by glutamine, and one molecule of ATP is hydrogenolyzed for each amidation. The protein is Cobyric acid synthase of Nocardia farcinica (strain IFM 10152).